The sequence spans 363 residues: Pyrimidine monooxygenase RutA (363 aa).

FMN-binding positions include 49–50 (IK), Asn-115, Glu-124, 140–141 (RY), and Ser-190.

The protein belongs to the NtaA/SnaA/DszA monooxygenase family. RutA subfamily.

It carries out the reaction uracil + FMNH2 + NADH + O2 = (Z)-3-ureidoacrylate + FMN + NAD(+) + H2O + H(+). The catalysed reaction is thymine + FMNH2 + NADH + O2 = (Z)-2-methylureidoacrylate + FMN + NAD(+) + H2O + H(+). Its function is as follows. Catalyzes the pyrimidine ring opening between N-3 and C-4 by an unusual flavin hydroperoxide-catalyzed mechanism, adding oxygen atoms in the process to yield ureidoacrylate peracid, that immediately reacts with FMN forming ureidoacrylate and FMN-N(5)-oxide. The FMN-N(5)-oxide reacts spontaneously with NADH to produce FMN. Requires the flavin reductase RutF to regenerate FMN in vivo. The polypeptide is Pyrimidine monooxygenase RutA (Escherichia coli O44:H18 (strain 042 / EAEC)).